The following is a 481-amino-acid chain: Glutamyl-tRNA(Gln) amidotransferase subunit A (481 aa).

Active-site charge relay system residues include Lys-76 and Ser-151. Ser-175 acts as the Acyl-ester intermediate in catalysis.

The protein belongs to the amidase family. GatA subfamily. As to quaternary structure, heterotrimer of A, B and C subunits.

It catalyses the reaction L-glutamyl-tRNA(Gln) + L-glutamine + ATP + H2O = L-glutaminyl-tRNA(Gln) + L-glutamate + ADP + phosphate + H(+). In terms of biological role, allows the formation of correctly charged Gln-tRNA(Gln) through the transamidation of misacylated Glu-tRNA(Gln) in organisms which lack glutaminyl-tRNA synthetase. The reaction takes place in the presence of glutamine and ATP through an activated gamma-phospho-Glu-tRNA(Gln). The polypeptide is Glutamyl-tRNA(Gln) amidotransferase subunit A (Neisseria meningitidis serogroup C (strain 053442)).